Consider the following 375-residue polypeptide: MYLSELQLNHYRNYESVDVHFSPDTNVLIGENAQGKTNLLEAIYVLALARSHRTNTDRELIQWHEDFAKITGLVQRSAGKTPLELVLSQKGKKAKVNHLEQAKLSQYIGQLNVVLFAPEDLNIVKGSPAVRRHFIDMEFGQMSSKYLYNISQYKSILKQRNQYLKQLQRRQAKDLVYLGVLSDQLAAYGAEVTVARRQFLQQMEKWAQKLHQEITKDREVLTFKYQSQIPEEQLDQSVEELYQQFQTLYEKQQIREVEQGTTLIGPHRDDVQFLVNDKDVQAFGSQGQQRTTALSVKLAEIDLMKAQTGEYPILLLDDVLSELDDLRQTHLLKTFQNKVQTFLTTTSLENVKKEIIATPRVFTVTNGVVIEEQAE.

30–37 (GENAQGKT) is a binding site for ATP.

This sequence belongs to the RecF family.

The protein localises to the cytoplasm. Functionally, the RecF protein is involved in DNA metabolism; it is required for DNA replication and normal SOS inducibility. RecF binds preferentially to single-stranded, linear DNA. It also seems to bind ATP. The sequence is that of DNA replication and repair protein RecF from Latilactobacillus sakei subsp. sakei (strain 23K) (Lactobacillus sakei subsp. sakei).